A 197-amino-acid chain; its full sequence is Probable GTP-binding protein EngB (197 aa).

The EngB-type G domain maps to 24–197; it reads DIPEIALAGR…WDAILEKVNK (174 aa). Residues 32–39, 59–63, 77–80, 144–147, and 176–178 contribute to the GTP site; these read GRSNVGKS, GKTQL, DVPG, TKAD, and FSS. Mg(2+) is bound by residues Ser-39 and Thr-61.

The protein belongs to the TRAFAC class TrmE-Era-EngA-EngB-Septin-like GTPase superfamily. EngB GTPase family. Mg(2+) is required as a cofactor.

Necessary for normal cell division and for the maintenance of normal septation. The sequence is that of Probable GTP-binding protein EngB from Streptococcus gordonii (strain Challis / ATCC 35105 / BCRC 15272 / CH1 / DL1 / V288).